Consider the following 275-residue polypeptide: Small ribosomal subunit protein uS2 (275 aa).

A disordered region spans residues 226–275; the sequence is AAAPNSASVREEEFSAEAGDEGKGRRAPAKKATEKKADAPAAAPEAPAAE. Residues 264–275 show a composition bias toward low complexity; sequence APAAAPEAPAAE.

The protein belongs to the universal ribosomal protein uS2 family.

The sequence is that of Small ribosomal subunit protein uS2 from Xanthomonas campestris pv. campestris (strain 8004).